A 350-amino-acid chain; its full sequence is MSDTTQVGWQLSEHAPLRALNTFHVEATARWLLSVHTPEALPQALAAPEIADQPLLVLGSGSNVLLAGDPPGCVLCFENRDTAIIAHHADHAIVRAGAGVNWHALVLYSLQQGLSGLENLALIPGTVGACPIQNIGAYGAQVGDFIHVVEAFDRHHQQFVRLDAAACALGYRDSVFKQQPERYLIVAVEFNLPLLCELRLDYAGIREELASMGAELARAADVAQAVINIRQRKLPDPDVLGNAGSFFKNPLLPNEQIAALQASFTDMPVYPGEHAGLGKLSAAWLIEQCGWKGRREGDAGVSPEHALVLVNYGTASGAQLLDFARRIAESVRERYSVILEPEPRIIGAHW.

Residues 24-195 enclose the FAD-binding PCMH-type domain; sequence HVEATARWLL…VAVEFNLPLL (172 aa). Residue Arg172 is part of the active site. Ser245 serves as the catalytic Proton donor. Residue Glu342 is part of the active site.

Belongs to the MurB family. FAD is required as a cofactor.

It localises to the cytoplasm. It carries out the reaction UDP-N-acetyl-alpha-D-muramate + NADP(+) = UDP-N-acetyl-3-O-(1-carboxyvinyl)-alpha-D-glucosamine + NADPH + H(+). The protein operates within cell wall biogenesis; peptidoglycan biosynthesis. In terms of biological role, cell wall formation. This Xanthomonas oryzae pv. oryzae (strain MAFF 311018) protein is UDP-N-acetylenolpyruvoylglucosamine reductase.